We begin with the raw amino-acid sequence, 345 residues long: Growth hormone-inducible transmembrane protein (345 aa).

Residues 1–45 (MLAARLVCLRTLPSRVFHPAFTKASPVVKNSITKNQWLLTPSREY) constitute a mitochondrion transit peptide. Over 46 to 82 (ATKTRIGIRRGRTGQELKEAALEPSMEKIFKIDQMGR) the chain is Mitochondrial matrix. A helical transmembrane segment spans residues 83-103 (WFVAGGAAVGLGALCYYGLGL). Topologically, residues 104-125 (SNEIGAIEKAVIWPQYVKDRIH) are mitochondrial intermembrane. A helical membrane pass occupies residues 126-146 (STYMYLAGSIGLTALSAIAIS). Topologically, residues 147–159 (RTPVLMNFMMRGS) are mitochondrial matrix. The chain crosses the membrane as a helical span at residues 160 to 180 (WVTIGVTFAAMVGAGMLVRSI). At 181–190 (PYDQSPGPKH) the chain is on the mitochondrial intermembrane side. A helical membrane pass occupies residues 191-211 (LAWLLHSGVMGAVVAPLTILG). At 212-213 (GP) the chain is on the mitochondrial matrix side. Residues 214–234 (LLIRAAWYTAGIVGGLSTVAM) traverse the membrane as a helical segment. Over 235 to 244 (CAPSEKFLNM) the chain is Mitochondrial intermembrane. The helical transmembrane segment at 245-265 (GAPLGVGLGLVFVSSLGSMFL) threads the bilayer. At 266 to 271 (PPTTVA) the chain is on the mitochondrial matrix side. Residues 272–292 (GATLYSVAMYGGLVLFSMFLL) form a helical membrane-spanning segment. Residues 293-345 (YDTQKVIKRAEVSPMYGVQKYDPINSMLSIYMDTLNIFMRVATMLATGGNRKK) lie on the Mitochondrial intermembrane side of the membrane.

It belongs to the BI1 family. Interacts with LETM1. Interacts with AFG3L2. In terms of processing, undergoes AFG3L2-mediated proteolytic degradation, upon hyperpolarization of mitochondria.

Its subcellular location is the mitochondrion inner membrane. It catalyses the reaction Ca(2+)(in) + 2 H(+)(out) = Ca(2+)(out) + 2 H(+)(in). It carries out the reaction K(+)(in) + H(+)(out) = K(+)(out) + H(+)(in). Functionally, plays an important role in maintenance of mitochondrial morphology and in mediating either calcium or potassium/proton antiport. Mediates proton-dependent calcium efflux from mitochondrion. Also functions as an electroneutral mitochondrial proton/potassium exchanger. Required for the mitochondrial tubular network and cristae organization. Involved in apoptotic release of cytochrome c. Inhibits the proteolytic activity of AFG3L2, stimulating respiration and stabilizing respiratory enzymes in actively respiring mitochondria. However, when mitochondria become hyperpolarized, GHITM loses its inhibitory activity toward AFG3L2 and the now the active AFG3L2 turns first on GHITM and, if hyperpolarization persists, on other proteins of the mitochondria, leading to a broad remodeling of the mitochondrial proteome. The protein is Growth hormone-inducible transmembrane protein (GHITM) of Homo sapiens (Human).